The chain runs to 835 residues: Protein translocase subunit SecA (835 aa).

Residues Gln-85, 103-107 (GEGKT), and Asp-492 contribute to the ATP site. Zn(2+)-binding residues include Cys-819, Cys-821, Cys-830, and Cys-831.

Belongs to the SecA family. Monomer and homodimer. Part of the essential Sec protein translocation apparatus which comprises SecA, SecYEG and auxiliary proteins SecDF. Other proteins may also be involved. Requires Zn(2+) as cofactor.

The protein localises to the cell membrane. It localises to the cytoplasm. It catalyses the reaction ATP + H2O + cellular proteinSide 1 = ADP + phosphate + cellular proteinSide 2.. Functionally, part of the Sec protein translocase complex. Interacts with the SecYEG preprotein conducting channel. Has a central role in coupling the hydrolysis of ATP to the transfer of proteins into and across the cell membrane, serving as an ATP-driven molecular motor driving the stepwise translocation of polypeptide chains across the membrane. The protein is Protein translocase subunit SecA of Clostridium botulinum (strain Kyoto / Type A2).